The following is a 201-amino-acid chain: 3-isopropylmalate dehydratase small subunit (201 aa).

It belongs to the LeuD family. LeuD type 1 subfamily. Heterodimer of LeuC and LeuD.

It carries out the reaction (2R,3S)-3-isopropylmalate = (2S)-2-isopropylmalate. Its pathway is amino-acid biosynthesis; L-leucine biosynthesis; L-leucine from 3-methyl-2-oxobutanoate: step 2/4. Functionally, catalyzes the isomerization between 2-isopropylmalate and 3-isopropylmalate, via the formation of 2-isopropylmaleate. The chain is 3-isopropylmalate dehydratase small subunit from Brucella anthropi (strain ATCC 49188 / DSM 6882 / CCUG 24695 / JCM 21032 / LMG 3331 / NBRC 15819 / NCTC 12168 / Alc 37) (Ochrobactrum anthropi).